We begin with the raw amino-acid sequence, 929 residues long: Synaptopodin (929 aa).

Met-1 bears the N-acetylmethionine mark. The segment covering 1–12 (MLGPHLPPPPLA) has biased composition (pro residues). The disordered stretch occupies residues 1 to 260 (MLGPHLPPPP…EASLLRHLEK (260 aa)). Composition is skewed to basic and acidic residues over residues 60 to 69 (GVSRSGDDSA) and 91 to 110 (SREEQGASQHDDRASQDWDV). A Phosphoserine modification is found at Ser-140. A compositionally biased stretch (basic and acidic residues) spans 142 to 151 (TEKDLKEAKA). Positions 152 to 170 (RSQQIAAQLTTPPSSNSRG) are enriched in polar residues. Ser-207 bears the Phosphoserine mark. Residues 224-234 (EPGPPRHPSPQ) show a composition bias toward pro residues. The residue at position 263 (Ser-263) is a Phosphoserine. Residues 285–389 (GLHLSQNREA…TLCADGQPQA (105 aa)) form a disordered region. Residues 317 to 332 (LASPSATLTTPTSNSS) show a composition bias toward low complexity. Asn-330 carries N-linked (GlcNAc...) asparagine glycosylation. The segment covering 333 to 379 (HNPPATDVNQNPPATVVPQSLPLSSIQQNSSEAQLPSNGTGPASKPS) has biased composition (polar residues). 2 positions are modified to phosphoserine: Ser-501 and Ser-525. Positions 509 to 558 (FGEKAPAPQPPSLPDRSPRPQRHIMSRSPMVERRMMGQRSPASERRPLGN) are disordered. Position 560 is a phosphothreonine (Thr-560). A PPxY motif motif is present at residues 562–565 (PPTY). Phosphoserine is present on Ser-580. The short motif at 581-584 (PPSY) is the PPxY motif element. 2 disordered regions span residues 589-610 (PSSDPKSSHLKGQAVPASKTGI) and 630-726 (KPKV…KGAE). Residues 646–656 (ADEKRRQRDQG) are compositionally biased toward basic and acidic residues. A phosphoserine mark is found at Ser-685, Ser-702, and Tyr-738. Positions 685–698 (SPAAAEEVVPEWAS) are enriched in low complexity. The interval 740–763 (IESSSHTPELARCPSPTMSLPSSW) is disordered. Thr-746 bears the Phosphothreonine mark. Phosphoserine is present on residues Ser-754, Ser-758, and Ser-779. Thr-783 bears the Phosphothreonine mark. Pro-784, Thr-804, Arg-812, Lys-826, Ser-833, Ser-854, Pro-871, and Pro-894 each carry phosphoserine. The span at 826-839 (KVSPRAASPAKPSS) shows a compositional bias: low complexity. The disordered stretch occupies residues 826–916 (KVSPRAASPA…RPSFSTRNAG (91 aa)). The segment covering 866 to 880 (GLYTSPGQDSLQPTA) has biased composition (polar residues).

It belongs to the synaptopodin family. As to quaternary structure, interacts with BAIAP1. Interacts with actin. Interacts (via PPxY motifs) with WWC1 (via WW domains). O-glycosylated. In terms of tissue distribution, expressed in cerebral cortex.

It localises to the cytoplasm. Its subcellular location is the cytoskeleton. The protein resides in the cell junction. The protein localises to the tight junction. It is found in the perikaryon. It localises to the cell projection. Its subcellular location is the dendritic spine. The protein resides in the postsynaptic density. The protein localises to the synapse. It is found in the cytosol. In terms of biological role, actin-associated protein that may play a role in modulating actin-based shape and motility of dendritic spines and renal podocyte foot processes. Seems to be essential for the formation of spine apparatuses in spines of telencephalic neurons, which is involved in synaptic plasticity. The protein is Synaptopodin (SYNPO) of Homo sapiens (Human).